Here is a 169-residue protein sequence, read N- to C-terminus: Peptide deformylase (169 aa).

2 residues coordinate Fe cation: cysteine 94 and histidine 136. Glutamate 137 is an active-site residue. Histidine 140 contributes to the Fe cation binding site.

It belongs to the polypeptide deformylase family. It depends on Fe(2+) as a cofactor.

It carries out the reaction N-terminal N-formyl-L-methionyl-[peptide] + H2O = N-terminal L-methionyl-[peptide] + formate. In terms of biological role, removes the formyl group from the N-terminal Met of newly synthesized proteins. Requires at least a dipeptide for an efficient rate of reaction. N-terminal L-methionine is a prerequisite for activity but the enzyme has broad specificity at other positions. The polypeptide is Peptide deformylase (Desulfotalea psychrophila (strain LSv54 / DSM 12343)).